A 793-amino-acid chain; its full sequence is DnaJ homolog subfamily C member 10 (793 aa).

Residues 1 to 32 (MGVWLNKDDYIRDLKRIILCFLIVYMAILVGT) form the signal peptide. In terms of domain architecture, J spans 35-100 (DFYSLLGVSK…DLRKKYDKYG (66 aa)). The region spanning 130–232 (EIITLERREF…ESLVSFAMQH (103 aa)) is the Thioredoxin 1 domain. Cysteines 158 and 161 form a disulfide. Trxb regions lie at residues 235–350 (STVT…LPDF) and 348–463 (PDFE…PQNF). Thioredoxin domains are found at residues 454–553 (HVTT…IEDL), 557–662 (SVVS…SLRI), and 671–778 (VSTD…ISEK). C480 and C483 are joined by a disulfide. The N-linked (GlcNAc...) asparagine glycan is linked to N530. Intrachain disulfides connect C588-C591 and C700-C703. The Prevents secretion from ER signature appears at 790-793 (KDEL).

As to quaternary structure, interacts with EDEM1. Interacts with HSPA5 (via its J domain).

It localises to the endoplasmic reticulum lumen. Functionally, endoplasmic reticulum disulfide reductase involved both in the correct folding of proteins and degradation of misfolded proteins. Required for efficient folding of proteins in the endoplasmic reticulum by catalyzing the removal of non-native disulfide bonds formed during the folding of proteins, such as LDLR. Also involved in endoplasmic reticulum-associated degradation (ERAD) by reducing incorrect disulfide bonds in misfolded glycoproteins recognized by EDEM1. Interaction with HSPA5 is required its activity, not for the disulfide reductase activity, but to facilitate the release of DNAJC10 from its substrate. Promotes apoptotic signaling pathway in response to endoplasmic reticulum stress. This Homo sapiens (Human) protein is DnaJ homolog subfamily C member 10 (DNAJC10).